A 142-amino-acid polypeptide reads, in one-letter code: Large ribosomal subunit protein uL13 (142 aa).

Belongs to the universal ribosomal protein uL13 family. In terms of assembly, part of the 50S ribosomal subunit.

Its function is as follows. This protein is one of the early assembly proteins of the 50S ribosomal subunit, although it is not seen to bind rRNA by itself. It is important during the early stages of 50S assembly. The protein is Large ribosomal subunit protein uL13 of Vibrio cholerae serotype O1 (strain M66-2).